A 460-amino-acid chain; its full sequence is Chromosomal replication initiator protein DnaA (460 aa).

Positions M1–I91 are domain I, interacts with DnaA modulators. Residues I91 to S122 form a domain II region. The tract at residues P123–S342 is domain III, AAA+ region. ATP-binding residues include G169, G171, K172, and T173. The segment at L343–K460 is domain IV, binds dsDNA.

The protein belongs to the DnaA family. As to quaternary structure, oligomerizes as a right-handed, spiral filament on DNA at oriC.

It localises to the cytoplasm. Functionally, plays an essential role in the initiation and regulation of chromosomal replication. ATP-DnaA binds to the origin of replication (oriC) to initiate formation of the DNA replication initiation complex once per cell cycle. Binds the DnaA box (a 9 base pair repeat at the origin) and separates the double-stranded (ds)DNA. Forms a right-handed helical filament on oriC DNA; dsDNA binds to the exterior of the filament while single-stranded (ss)DNA is stabiized in the filament's interior. The ATP-DnaA-oriC complex binds and stabilizes one strand of the AT-rich DNA unwinding element (DUE), permitting loading of DNA polymerase. After initiation quickly degrades to an ADP-DnaA complex that is not apt for DNA replication. Binds acidic phospholipids. The polypeptide is Chromosomal replication initiator protein DnaA (Wolbachia pipientis wMel).